The sequence spans 376 residues: Lipoyl synthase, mitochondrial (376 aa).

Residues Cys-102, Cys-107, Cys-113, Cys-133, Cys-137, Cys-140, and Ser-348 each coordinate [4Fe-4S] cluster. Residues 116-337 form the Radical SAM core domain; that stretch reads GGEDKTATAT…EEVGGEMGFA (222 aa).

This sequence belongs to the radical SAM superfamily. Lipoyl synthase family. It depends on [4Fe-4S] cluster as a cofactor.

The protein resides in the mitochondrion. It catalyses the reaction [[Fe-S] cluster scaffold protein carrying a second [4Fe-4S](2+) cluster] + N(6)-octanoyl-L-lysyl-[protein] + 2 oxidized [2Fe-2S]-[ferredoxin] + 2 S-adenosyl-L-methionine + 4 H(+) = [[Fe-S] cluster scaffold protein] + N(6)-[(R)-dihydrolipoyl]-L-lysyl-[protein] + 4 Fe(3+) + 2 hydrogen sulfide + 2 5'-deoxyadenosine + 2 L-methionine + 2 reduced [2Fe-2S]-[ferredoxin]. Its pathway is protein modification; protein lipoylation via endogenous pathway; protein N(6)-(lipoyl)lysine from octanoyl-[acyl-carrier-protein]: step 2/2. In terms of biological role, catalyzes the radical-mediated insertion of two sulfur atoms into the C-6 and C-8 positions of the octanoyl moiety bound to the lipoyl domains of lipoate-dependent enzymes, thereby converting the octanoylated domains into lipoylated derivatives. The polypeptide is Lipoyl synthase, mitochondrial (Branchiostoma floridae (Florida lancelet)).